The following is a 240-amino-acid chain: Competence protein ComFC (240 aa).

Belongs to the ComF/GntX family. Monomer and dimer in solution. Interacts with ComFA and DprA; ComFA-ComFC form rings about 150 Angstroms in diameter with apparent 6-fold symmetry.

Its function is as follows. Involved in transformation (genetic competence for DNA uptake). The polypeptide is Competence protein ComFC (comFC) (Bacillus subtilis (strain 168)).